A 395-amino-acid polypeptide reads, in one-letter code: MKKLLKSVLVFAALSSASSLQALPVGNPAEPSLMIDGILWEGFGGDPCDPCTTWCDAISMRMGYYGDFVFDRVLKTDVNKEFEMGEALAGASGNTTSTLSKLVERTNPAYGKHMQDAEMFTNAACMTLNIWDRFDVFCTLGATSGYLKGNSASFNLVGLFGDGVNATKPAADSIPNVQLNQSVVELYTDTTFAWSVGARAALWECGCATLGASFQYAQSKPKIEELNVLCNAAEFTINKPKGYVGKEFPLDLTAGTDAATGTKDASIDYHEWQASLSLSYRLNMFTPYIGVKWSRASFDSDTIRIAQPRLVTPVVDITTLNPTIAGCGSVAGANTEGQISDTMQIVSLQLNKMKSRKSCGIAVGTTIVDADKYAVTVETRLIDERAAHVNAQFRF.

The first 22 residues, 1–22 (MKKLLKSVLVFAALSSASSLQA), serve as a signal peptide directing secretion.

It belongs to the chlamydial porin (CP) (TC 1.B.2) family. In terms of assembly, part of a disulfide cross-linked outer membrane complex (COMC) composed of the major outer membrane porin (MOMP), the small cysteine-rich protein (OmcA) and the large cysteine-rich periplasmic protein (OmcB).

Its subcellular location is the cell outer membrane. Functionally, in elementary bodies (EBs, the infectious stage, which is able to survive outside the host cell) provides the structural integrity of the outer envelope through disulfide cross-links with the small cysteine-rich protein and the large cysteine-rich periplasmic protein. It has been described in publications as the Sarkosyl-insoluble COMC (Chlamydia outer membrane complex), and serves as the functional equivalent of peptidoglycan. Its function is as follows. Permits diffusion of specific solutes through the outer membrane. The chain is Major outer membrane porin, serovar F (ompA) from Chlamydia trachomatis.